The chain runs to 535 residues: Heat shock factor protein 2 (535 aa).

Glycyl lysine isopeptide (Lys-Gly) (interchain with G-Cter in SUMO2) cross-links involve residues Lys2, Lys82, Lys135, Lys139, Lys151, Lys210, Lys218, and Lys237. A DNA-binding region spans residues 7–112 (VPAFLSKLWT…LLENIKRKVS (106 aa)). Residues 119 to 192 (NKIRQEDLTK…VTLVQNNQLV (74 aa)) form a hydrophobic repeat HR-A/B region. The interval 298–325 (QSGEQSEPAREPLRVGSAGSSSPLMSSA) is disordered. A compositionally biased stretch (low complexity) spans 313-325 (GSAGSSSPLMSSA). Residues 359-384 (LLDYLDSIDCSLEDFQAMLSGRQFSI) are hydrophobic repeat HR-C. The interval 418–437 (TKSSVVQHVSEEGRKSKSKP) is disordered. Positions 426-437 (VSEEGRKSKSKP) are enriched in basic and acidic residues.

It belongs to the HSF family. In terms of assembly, DNA-binding homotrimer in stressed or heat shocked cells, otherwise found as a homodimer. In terms of tissue distribution, isoform alpha is expressed predominantly in testis while isoform beta is expressed predominantly in heart and brain.

It is found in the cytoplasm. The protein resides in the nucleus. In terms of biological role, DNA-binding protein that specifically binds heat shock promoter elements (HSE) and activates transcription. In higher eukaryotes, HSF is unable to bind to the HSE unless the cells are heat shocked. HSF2 is expressed in a form that binds DNA constitutively but loses DNA binding by incubation at greater than 41 degrees C. The protein is Heat shock factor protein 2 (Hsf2) of Mus musculus (Mouse).